The sequence spans 91 residues: Putative defective replication initiation protein (91 aa).

This Escherichia coli (strain K12) protein is Putative defective replication initiation protein (repA1).